A 210-amino-acid chain; its full sequence is Na(+)-translocating NADH-quinone reductase subunit D (210 aa).

6 consecutive transmembrane segments (helical) span residues 10 to 30 (VLFGPILDNNPIALQILGVCS), 42 to 62 (LVMSLALTAVTAFSNLFISMI), 72 to 92 (IIVQMTIIASLVIVVDQILKA), 103 to 123 (VFVGLIITNCIVMGRAEAFAM), 143 to 163 (FVLIVIGTIKELFGFGTILGF), and 178 to 198 (NGLLILPFSSFFLIGGLIWFI).

It belongs to the NqrDE/RnfAE family. As to quaternary structure, composed of six subunits; NqrA, NqrB, NqrC, NqrD, NqrE and NqrF.

Its subcellular location is the cell inner membrane. The catalysed reaction is a ubiquinone + n Na(+)(in) + NADH + H(+) = a ubiquinol + n Na(+)(out) + NAD(+). NQR complex catalyzes the reduction of ubiquinone-1 to ubiquinol by two successive reactions, coupled with the transport of Na(+) ions from the cytoplasm to the periplasm. NqrA to NqrE are probably involved in the second step, the conversion of ubisemiquinone to ubiquinol. The chain is Na(+)-translocating NADH-quinone reductase subunit D from Pseudoalteromonas atlantica (strain T6c / ATCC BAA-1087).